The chain runs to 563 residues: Eukaryotic translation initiation factor 3 subunit D-1 (563 aa).

The segment at 98–167 (VQKPPHQRGR…GPPPKMRESS (70 aa)) is disordered. The span at 100-121 (KPPHQRGRFRNMRNSRSGRGRN) shows a compositional bias: basic residues. Phosphothreonine is present on T128. The segment at 291–305 (EFDLLTVNETSVEPP) is RNA gate.

It belongs to the eIF-3 subunit D family. As to quaternary structure, component of the eukaryotic translation initiation factor 3 (eIF-3) complex. The eIF-3 complex interacts with pix.

The protein localises to the cytoplasm. Its function is as follows. mRNA cap-binding component of the eukaryotic translation initiation factor 3 (eIF-3) complex, which is involved in protein synthesis of a specialized repertoire of mRNAs and, together with other initiation factors, stimulates binding of mRNA and methionyl-tRNAi to the 40S ribosome. The eIF-3 complex specifically targets and initiates translation of a subset of mRNAs involved in cell proliferation. In the eIF-3 complex, eif3d specifically recognizes and binds the 7-methylguanosine cap of a subset of mRNAs. This Drosophila mojavensis (Fruit fly) protein is Eukaryotic translation initiation factor 3 subunit D-1.